Consider the following 954-residue polypeptide: Glycine dehydrogenase (decarboxylating) (954 aa).

Lys-704 carries the N6-(pyridoxal phosphate)lysine modification.

The protein belongs to the GcvP family. As to quaternary structure, the glycine cleavage system is composed of four proteins: P, T, L and H. It depends on pyridoxal 5'-phosphate as a cofactor.

The catalysed reaction is N(6)-[(R)-lipoyl]-L-lysyl-[glycine-cleavage complex H protein] + glycine + H(+) = N(6)-[(R)-S(8)-aminomethyldihydrolipoyl]-L-lysyl-[glycine-cleavage complex H protein] + CO2. Its function is as follows. The glycine cleavage system catalyzes the degradation of glycine. The P protein binds the alpha-amino group of glycine through its pyridoxal phosphate cofactor; CO(2) is released and the remaining methylamine moiety is then transferred to the lipoamide cofactor of the H protein. The polypeptide is Glycine dehydrogenase (decarboxylating) (Sinorhizobium medicae (strain WSM419) (Ensifer medicae)).